We begin with the raw amino-acid sequence, 570 residues long: Phosphoribosylaminoimidazole carboxylase (570 aa).

The ATP-grasp domain occupies 110 to 297; the sequence is KQHLVKNRIP…QFEAHLRAIL (188 aa). Residue 137–192 coordinates ATP; that stretch reads GSSLGYPFVLKSRTLAYDGRGNFVVKSEEDIEKGLEFLANRPLYAEKWASFKKELS.

It in the C-terminal section; belongs to the AIR carboxylase family. Class I subfamily.

The enzyme catalyses 5-amino-1-(5-phospho-D-ribosyl)imidazole-4-carboxylate + H(+) = 5-amino-1-(5-phospho-beta-D-ribosyl)imidazole + CO2. It participates in purine metabolism; IMP biosynthesis via de novo pathway; 5-amino-1-(5-phospho-D-ribosyl)imidazole-4-carboxylate from 5-amino-1-(5-phospho-D-ribosyl)imidazole (carboxylase route): step 1/1. In Candida glabrata (strain ATCC 2001 / BCRC 20586 / JCM 3761 / NBRC 0622 / NRRL Y-65 / CBS 138) (Yeast), this protein is Phosphoribosylaminoimidazole carboxylase (ADE2).